The following is a 709-amino-acid chain: Solute carrier organic anion transporter family member 2B1 (709 aa).

Residues 1–38 (MGPRIGPAGEVPQVPDKETKATMGTENTPGGKASPDPQ) form a disordered region. Residues 1–49 (MGPRIGPAGEVPQVPDKETKATMGTENTPGGKASPDPQDVRPSVFHNIK) lie on the Cytoplasmic side of the membrane. The residue at position 34 (Ser-34) is a Phosphoserine. The helical transmembrane segment at 50 to 69 (LFVLCHSLLQLAQLMISGYL) threads the bilayer. Residues 51–69 (FVLCHSLLQLAQLMISGYL) form a required for E1S and taurocholate transport; required for transporter stability region. At 70–88 (KSSISTVEKRFGLSSQTSG) the chain is on the extracellular side. The helical transmembrane segment at 89–109 (LLASFNEVGNTALIVFVSYFG) threads the bilayer. The Cytoplasmic portion of the chain corresponds to 110-115 (SRVHRP). A helical membrane pass occupies residues 116 to 140 (RMIGYGAILVALAGLLMTLPHFISE). Topologically, residues 141 to 185 (PYRYDNTSPEDMPQDFKASLCLPTTSAPASAPSNGNCSSYTETQH) are extracellular. A glycan (N-linked (GlcNAc...) asparagine) is linked at Asn-176. The chain crosses the membrane as a helical span at residues 186-215 (LSVVGIMFVAQTLLGVGGVPIQPFGISYID). Residues 216 to 234 (DFAHNSNSPLYLGILFAVT) lie on the Cytoplasmic side of the membrane. Residues 235–255 (MMGPGLAFGLGSLMLRLYVDI) traverse the membrane as a helical segment. The Extracellular segment spans residues 256-273 (NQMPEGGISLTIKDPRWV). A helical transmembrane segment spans residues 274–298 (GAWWLGFLIAAGAVALAAIPYFFFP). Topologically, residues 299–366 (KEMPKEKREL…IKVFPRVLLQ (68 aa)) are cytoplasmic. Thr-318 is subject to Phosphothreonine. Residues 319-342 (DSPARKGKDSPSKQSPGESTKKQD) form a disordered region. At Ser-320 the chain carries Phosphoserine. A helical membrane pass occupies residues 367-388 (TLRHPIFLLVVLSQVCLSSMAA). The Extracellular portion of the chain corresponds to 389–408 (GMATFLPKFLERQFSITASY). The chain crosses the membrane as a helical span at residues 409 to 432 (ANLLIGCLSFPSVIVGIVVGGVLV). Residues 433–436 (KRLH) are Cytoplasmic-facing. The chain crosses the membrane as a helical span at residues 437-460 (LGPVGCGALCLLGMLLCLFFSLPL). The Extracellular segment spans residues 461 to 564 (FFIGCSSHQI…STCSHLVVPF (104 aa)). A Kazal-like domain is found at 483–543 (LELSPSCMEA…VFYTNCSCVV (61 aa)). 3 cysteine pairs are disulfide-bonded: Cys-489–Cys-520, Cys-495–Cys-516, and Cys-504–Cys-541. Residue Asn-538 is glycosylated (N-linked (GlcNAc...) asparagine). The chain crosses the membrane as a helical span at residues 565-587 (LLLVSLGSALACLTHTPSFMLIL). Topologically, residues 588–596 (RGVKKEDKT) are cytoplasmic. The helical transmembrane segment at 597–622 (LAVGIQFMFLRILAWMPSPVIHGSAI) threads the bilayer. Residues 623 to 655 (DTTCVHWALSCGRRAVCRYYNNDLLRNRFIGLQ) lie on the Extracellular side of the membrane. Residues 656–673 (FFFKTGSVICFALVLAVL) traverse the membrane as a helical segment. At 674 to 709 (RQQDKEARTKESRSSPAVEQQLLVSGPGKKPEDSRV) the chain is on the cytoplasmic side. A disordered region spans residues 679 to 709 (EARTKESRSSPAVEQQLLVSGPGKKPEDSRV).

Belongs to the organo anion transporter (TC 2.A.60) family. Strongly expressed in the liver, at the sinusoidal membrane of the hepatocytes. Expressed in the kidney. Expressed in placental trophoblasts and syncytiotrophoblast. Expressed in the small intestine. Expressed in the blood-brain barrier, in endothelial cells of brain capillaries. Expressed in the retina, in the inner nuclear layer and the inner plexiform layer. Expressed in skelettal muscles. In testis, primarily localized to the basal membrane of Sertoli cells and weakly expressed within the tubules. Also expressed in pancreas, lung, heart, colon, ovary and spleen. Expressed in fetal brain, heart, kidney, liver, lung, skeletal muscle, spleen and pancreas. As to expression, highest expression in brain. Predominant isoform compared to isoform 3 in small intestine duodenum, kidney, placenta, and skeletal muscle. In terms of tissue distribution, predominant isoform compared to isoform 1 in liver. Also expressed in small intestine duodenum, kidney, brain, placenta, and skeletal muscle.

Its subcellular location is the cell membrane. It is found in the basal cell membrane. The protein resides in the basolateral cell membrane. The protein localises to the apical cell membrane. The catalysed reaction is dehydroepiandrosterone 3-sulfate(out) = dehydroepiandrosterone 3-sulfate(in). The enzyme catalyses estrone 3-sulfate(out) = estrone 3-sulfate(in). It catalyses the reaction estrone 3-sulfate(out) + hydrogencarbonate(in) = estrone 3-sulfate(in) + hydrogencarbonate(out). It carries out the reaction taurocholate(out) = taurocholate(in). The catalysed reaction is coproporphyrin III(out) = coproporphyrin III(in). The enzyme catalyses substance P(out) = substance P(in). It catalyses the reaction pregnenolone sulfate(out) = pregnenolone sulfate(in). It carries out the reaction prostaglandin E2(out) = prostaglandin E2(in). The catalysed reaction is prostaglandin D2(out) = prostaglandin D2(in). The enzyme catalyses L-thyroxine(out) = L-thyroxine(in). E1S, DHEA-S and PregS transports are regulated by steroid hormones. In the case of testosterone, transport of E1S and DHEA-S was inhibited, whereas progesterone stimulated E1S, DHEA-S and PregS uptake. Progesterone stimulates high-affinity uptake of E1S whereas it inhibits low-affinity uptake of E1S. Progesterone doesn't affect the uptake of PGE2. Functionally, mediates the Na(+)-independent transport of steroid sulfate conjugates and other specific organic anions. Responsible for the transport of estrone 3-sulfate (E1S) through the basal membrane of syncytiotrophoblast, highlighting a potential role in the placental absorption of fetal-derived sulfated steroids including the steroid hormone precursor dehydroepiandrosterone sulfate (DHEA-S). Also facilitates the uptake of sulfated steroids at the basal/sinusoidal membrane of hepatocytes, therefore accounting for the major part of organic anions clearance of liver. Mediates the intestinal uptake of sulfated steroids. Mediates the uptake of the neurosteroids DHEA-S and pregnenolone sulfate (PregS) into the endothelial cells of the blood-brain barrier as the first step to enter the brain. Also plays a role in the reuptake of neuropeptides such as substance P/TAC1 and vasoactive intestinal peptide/VIP released from retinal neurons. May act as a heme transporter that promotes cellular iron availability via heme oxygenase/HMOX2 and independently of TFRC. Also transports heme by-product coproporphyrin III (CPIII), and may be involved in their hepatic disposition. Mediates the uptake of other substrates such as prostaglandins D2 (PGD2), E1 (PGE1) and E2 (PGE2), taurocholate, L-thyroxine, leukotriene C4 and thromboxane B2. May contribute to regulate the transport of organic compounds in testis across the blood-testis-barrier. Shows a pH-sensitive substrate specificity which may be ascribed to the protonation state of the binding site and leads to a stimulation of substrate transport in an acidic microenvironment. The exact transport mechanism has not been yet deciphered but most likely involves an anion exchange, coupling the cellular uptake of organic substrate with the efflux of an anionic compound. Hydrogencarbonate/HCO3(-) acts as a probable counteranion that exchanges for organic anions. Cytoplasmic glutamate may also act as counteranion in the placenta. An inwardly directed proton gradient has also been proposed as the driving force of E1S uptake with a (H(+):E1S) stoichiometry of (1:1). In terms of biological role, has estrone 3-sulfate (E1S) transport activity comparable with the full-length isoform 1. In Homo sapiens (Human), this protein is Solute carrier organic anion transporter family member 2B1.